The primary structure comprises 436 residues: UDP-N-acetylmuramate--L-alanine ligase (436 aa).

110–116 (GAHGKTS) is a binding site for ATP.

It belongs to the MurCDEF family.

It is found in the cytoplasm. It carries out the reaction UDP-N-acetyl-alpha-D-muramate + L-alanine + ATP = UDP-N-acetyl-alpha-D-muramoyl-L-alanine + ADP + phosphate + H(+). Its pathway is cell wall biogenesis; peptidoglycan biosynthesis. Cell wall formation. This is UDP-N-acetylmuramate--L-alanine ligase from Lacticaseibacillus paracasei (strain ATCC 334 / BCRC 17002 / CCUG 31169 / CIP 107868 / KCTC 3260 / NRRL B-441) (Lactobacillus paracasei).